The following is an 88-amino-acid chain: Small ribosomal subunit protein bS20 (88 aa).

The tract at residues 1 to 27 (MANTASAKKMTRKIAKRTAINRSRRSR) is disordered.

It belongs to the bacterial ribosomal protein bS20 family.

In terms of biological role, binds directly to 16S ribosomal RNA. The polypeptide is Small ribosomal subunit protein bS20 (Methylobacterium radiotolerans (strain ATCC 27329 / DSM 1819 / JCM 2831 / NBRC 15690 / NCIMB 10815 / 0-1)).